Here is a 379-residue protein sequence, read N- to C-terminus: Glutamate 5-kinase (379 aa).

Lys-15 lines the ATP pocket. The substrate site is built by Ser-59, Asp-146, and Asn-158. 178–179 (TD) provides a ligand contact to ATP. One can recognise a PUA domain in the interval 285-363 (RGAVTVDVGA…SEFERLLGYS (79 aa)).

This sequence belongs to the glutamate 5-kinase family.

Its subcellular location is the cytoplasm. The enzyme catalyses L-glutamate + ATP = L-glutamyl 5-phosphate + ADP. Its pathway is amino-acid biosynthesis; L-proline biosynthesis; L-glutamate 5-semialdehyde from L-glutamate: step 1/2. In terms of biological role, catalyzes the transfer of a phosphate group to glutamate to form L-glutamate 5-phosphate. The sequence is that of Glutamate 5-kinase from Paracidovorax citrulli (strain AAC00-1) (Acidovorax citrulli).